A 299-amino-acid polypeptide reads, in one-letter code: Putative KilA-N domain-containing protein R879 (299 aa).

The 75-residue stretch at 1–75 (MKSDNGILMS…IKVSEIVLSY (75 aa)) folds into the KilA-N domain. Residues 76–150 (HAKEAIKEKE…DKKINELLSK (75 aa)) adopt a coiled-coil conformation.

In Acanthamoeba polyphaga mimivirus (APMV), this protein is Putative KilA-N domain-containing protein R879.